A 651-amino-acid chain; its full sequence is Methionine--tRNA ligase (651 aa).

The short motif at 10-20 (AYTNGPLHLGH) is the 'HIGH' region element. Residues Cys142, Cys145, Cys154, and Cys157 each contribute to the Zn(2+) site. Residues 320 to 324 (KMSTS) carry the 'KMSKS' region motif. Thr323 is a binding site for ATP. Residues 550-651 (YLEKIDLRVG…KDIKAGSKVR (102 aa)) enclose the tRNA-binding domain.

Belongs to the class-I aminoacyl-tRNA synthetase family. MetG type 1 subfamily. Homodimer. Zn(2+) is required as a cofactor.

The protein localises to the cytoplasm. The enzyme catalyses tRNA(Met) + L-methionine + ATP = L-methionyl-tRNA(Met) + AMP + diphosphate. In terms of biological role, is required not only for elongation of protein synthesis but also for the initiation of all mRNA translation through initiator tRNA(fMet) aminoacylation. This Methanocaldococcus jannaschii (strain ATCC 43067 / DSM 2661 / JAL-1 / JCM 10045 / NBRC 100440) (Methanococcus jannaschii) protein is Methionine--tRNA ligase.